We begin with the raw amino-acid sequence, 78 residues long: Leukemia-associated protein 1 (78 aa).

Its function is as follows. May act as a tumor suppressor. This chain is Leukemia-associated protein 1 (DLEU1), found in Homo sapiens (Human).